Reading from the N-terminus, the 588-residue chain is bZip transcription factor GAP1 (588 aa).

The interval 1-49 (MAEVDNGGAQKSSASRKKRYQELDPETRMKRVAQNRAAQKAFRERKERK) is disordered. The span at 20 to 29 (YQELDPETRM) shows a compositional bias: basic and acidic residues. A bZIP domain is found at 25-88 (PETRMKRVAQ…SILVKELRKY (64 aa)). Residues 28 to 51 (RMKRVAQNRAAQKAFRERKERKMK) are basic motif. A leucine-zipper region spans residues 53–60 (LERKVVDL). Residues 164–174 (FNVTGQLTPPG) are compositionally biased toward polar residues. The disordered stretch occupies residues 164–219 (FNVTGQLTPPGNTSSSTTANSVAANAKKQSIPHSDSSDSNESKNTWNTDPTSSEDW). Positions 175 to 189 (NTSSSTTANSVAANA) are enriched in low complexity. Transcription activation stretches follow at residues 189 to 327 (AKKQ…SNTW) and 376 to 477 (GRTQ…MQTE). Residues 190–217 (KKQSIPHSDSSDSNESKNTWNTDPTSSE) are compositionally biased toward polar residues. Residues 253-265 (CTKLNQACGTKAC) are n-CRD. The disordered stretch occupies residues 487 to 529 (DMLNSSRMKETIDNQNIGEKTTKDDNEDDDEDDENDNTVVPSR). The segment covering 511-522 (DNEDDDEDDEND) has biased composition (acidic residues). The segment at 536-567 (CSEIWDRITAHPKYSDIDIDGLCSELMAKAKC) is c-CRD. Residues 552–559 (IDIDGLCS) carry the Nuclear export signal motif.

Its subcellular location is the nucleus. Its function is as follows. Transcription factor that plays a critical role in response to various stresses and reduces the stress through transcriptional activation of its target genes including multidrug transporter FLR1. This Candida glabrata (strain ATCC 2001 / BCRC 20586 / JCM 3761 / NBRC 0622 / NRRL Y-65 / CBS 138) (Yeast) protein is bZip transcription factor GAP1.